The primary structure comprises 611 residues: MSLLATVGPTGGVKNRLDIVDFVRDEKFFTLYVRALQAIQDKDQADYSSFFQLSGIHGLPFTPWAKPKDTPTVPYESGYCTHSQVLFPTWHRVYVSIYEQVLQEAAKGIAKKFTVHKKEWVQAAEDLRQPYWDTGFALVPPDEIIKLEQVKITNYDGTKITVRNPILRYSFHPIDPSFSGYPNFDTWRTTVRNPDADKKENIPALIAKLDLEADSTREKTYNMLKFNANWEAFSNHGEFDDTHANSLEAVHDDIHGFVGRGAIRGHMTHALFAAFDPIFWLHHSNVDRHLSLWQALYPGVWVTQGPEREGSMGFAPGTELNKDSALEPFYETEDKPWTSVPLTDTALLNYSYPDFDKVKGGTPDLVRDYINDHIDRRYGIKKSEGGKNPALDLLSDFKGVTHDHNEDLKMFDWTIQASWKKFELDDSFAIIFYFAADGSTNVTKENYIGSINIFRGTTPTNCANCRTQDNLVQEGFVHLDRFIARDLDTFDPQAVHRYLKEKKLSYKVVADDHSVTLKSLRIRVQGRPLHLPPGVSFPRLDKNIPIVNFDDVLDLVTGVVNIGLTAVGATAGVAIGVVGATAGTAIGVAGAATDAVTNIAKGGLGALGRIF.

Histidine 57, histidine 82, histidine 91, histidine 251, histidine 255, and histidine 283 together coordinate Cu cation. A cross-link (2'-(S-cysteinyl)-histidine (Cys-His)) is located at residues 80-82; it reads CTH. Histidine 255 is a binding site for substrate. The propeptide at 380–611 is removed in mature form; the sequence is IKKSEGGKNP…GGLGALGRIF (232 aa).

Belongs to the tyrosinase family. In terms of assembly, heterotetramer. Requires Cu(2+) as cofactor. Post-translationally, the C-ter is probably cleaved after Gly-379 since the mature active protein is smaller than the protein encoded by the gene.

It catalyses the reaction 2 L-dopa + O2 = 2 L-dopaquinone + 2 H2O. The enzyme catalyses L-tyrosine + O2 = L-dopaquinone + H2O. Functionally, copper-containing oxidase that catalyzes both the o-hydroxylation of monophenols and the subsequent oxidation of the resulting o-diphenols into reactive o-quinones, which evolve spontaneously to produce intermediates, which associate in dark brown pigments. Involved in the initial step of melanin synthesis. Melanins constitute a mechanism of defense and resistance to stress such as UV radiations, free radicals, gamma rays, dehydratation and extreme temperatures, and contribute to the fungal cell-wall resistance against hydrolytic enzymes in avoiding cellular lysis. Fungal pigments are also involved in the formation and stability of spores. The protein is Polyphenol oxidase 4 (PPO4) of Agaricus bisporus (White button mushroom).